We begin with the raw amino-acid sequence, 87 residues long: UPF0250 protein plu1293 (87 aa).

This sequence belongs to the UPF0250 family.

The polypeptide is UPF0250 protein plu1293 (Photorhabdus laumondii subsp. laumondii (strain DSM 15139 / CIP 105565 / TT01) (Photorhabdus luminescens subsp. laumondii)).